Consider the following 241-residue polypeptide: Zinc finger CCHC domain-containing protein 17 (241 aa).

An S1 motif domain is found at 16 to 88 (YTIFQGEVAM…DRIKVSLSMK (73 aa)). Ser-114 is modified (phosphoserine). The segment at 131–148 (TTCKKCGCKGHFAKDCFM) adopts a CCHC-type zinc-finger fold. Lys-144 bears the N6-acetyllysine mark. The interval 160–241 (EEEEEKEEAK…KKKHKKKHKE (82 aa)) is disordered. Over residues 166–178 (EEAKAEGLEKPDP) the composition is skewed to basic and acidic residues. The segment covering 182–198 (SSRKRKKEKKKKKHRDR) has biased composition (basic residues). Ser-183 carries the post-translational modification Phosphoserine. Over residues 211–225 (DTGKKARHSSKDSKA) the composition is skewed to basic and acidic residues. Residues 226–241 (TKKKKKKKKHKKKHKE) are compositionally biased toward basic residues.

In terms of assembly, interacts with PNN. Associates with the 60S ribosomal subunit. Expressed in liver, brain, heart, kidney testis, stomach, small intestine, skin, thymus, uterus, placenta, spleen, lung and skeletal muscle.

The protein resides in the nucleus. It is found in the nucleolus. The polypeptide is Zinc finger CCHC domain-containing protein 17 (Zcchc17) (Mus musculus (Mouse)).